A 270-amino-acid polypeptide reads, in one-letter code: Shikimate dehydrogenase (NADP(+)) (270 aa).

Shikimate-binding positions include serine 14 to serine 16 and threonine 61. Lysine 65 (proton acceptor) is an active-site residue. Shikimate-binding residues include asparagine 86 and aspartate 101. Residues glycine 126–alanine 130, asparagine 150–lysine 155, and methionine 215 each bind NADP(+). Tyrosine 217 serves as a coordination point for shikimate. Glycine 238 contributes to the NADP(+) binding site.

The protein belongs to the shikimate dehydrogenase family. Homodimer.

It carries out the reaction shikimate + NADP(+) = 3-dehydroshikimate + NADPH + H(+). It functions in the pathway metabolic intermediate biosynthesis; chorismate biosynthesis; chorismate from D-erythrose 4-phosphate and phosphoenolpyruvate: step 4/7. In terms of biological role, involved in the biosynthesis of the chorismate, which leads to the biosynthesis of aromatic amino acids. Catalyzes the reversible NADPH linked reduction of 3-dehydroshikimate (DHSA) to yield shikimate (SA). In Methylobacillus flagellatus (strain ATCC 51484 / DSM 6875 / VKM B-1610 / KT), this protein is Shikimate dehydrogenase (NADP(+)).